The following is a 29-amino-acid chain: uncharacterized protein (29 aa).

This is an uncharacterized protein from Haloarcula hispanica (His1V).